The chain runs to 344 residues: Dihydroorotase (344 aa).

Residues His13 and His15 each coordinate Zn(2+). Residues 15–17 and Asn41 contribute to the substrate site; that span reads HLR. Zn(2+)-binding residues include Lys98, His135, and His173. At Lys98 the chain carries N6-carboxylysine. His135 is a binding site for substrate. Position 218 (Leu218) interacts with substrate. Asp247 is a Zn(2+) binding site. Asp247 is a catalytic residue. Substrate-binding residues include His251 and Ala263.

This sequence belongs to the metallo-dependent hydrolases superfamily. DHOase family. Class II DHOase subfamily. Homodimer. The cofactor is Zn(2+).

It catalyses the reaction (S)-dihydroorotate + H2O = N-carbamoyl-L-aspartate + H(+). The protein operates within pyrimidine metabolism; UMP biosynthesis via de novo pathway; (S)-dihydroorotate from bicarbonate: step 3/3. In terms of biological role, catalyzes the reversible cyclization of carbamoyl aspartate to dihydroorotate. This is Dihydroorotase from Neisseria gonorrhoeae (strain NCCP11945).